The primary structure comprises 307 residues: ATP-dependent (S)-NAD(P)H-hydrate dehydratase (307 aa).

The region spanning 1 to 291 (MDHFIKLLPK…DEIPKLVRDV (291 aa)) is the YjeF C-terminal domain. Residues Gly-96 and 150 to 156 (NIVEFSR) contribute to the (6S)-NADPHX site. Residues 194 to 198 (KGEVD) and 214 to 223 (SSLRRCGGQG) each bind ATP. Asp-224 provides a ligand contact to (6S)-NADPHX.

It belongs to the NnrD/CARKD family. It depends on Mg(2+) as a cofactor.

It carries out the reaction (6S)-NADHX + ATP = ADP + phosphate + NADH + H(+). The catalysed reaction is (6S)-NADPHX + ATP = ADP + phosphate + NADPH + H(+). In terms of biological role, catalyzes the dehydration of the S-form of NAD(P)HX at the expense of ATP, which is converted to ADP. Together with NAD(P)HX epimerase, which catalyzes the epimerization of the S- and R-forms, the enzyme allows the repair of both epimers of NAD(P)HX, a damaged form of NAD(P)H that is a result of enzymatic or heat-dependent hydration. The sequence is that of ATP-dependent (S)-NAD(P)H-hydrate dehydratase from Caenorhabditis elegans.